A 381-amino-acid chain; its full sequence is Probable tRNA sulfurtransferase (381 aa).

In terms of domain architecture, THUMP spans 60–168; it reads REATEVLTRV…EGKAYIFVDK (109 aa). ATP is bound by residues 186 to 187, K269, G291, and Q300; that span reads LL.

This sequence belongs to the ThiI family.

The protein localises to the cytoplasm. It catalyses the reaction [ThiI sulfur-carrier protein]-S-sulfanyl-L-cysteine + a uridine in tRNA + 2 reduced [2Fe-2S]-[ferredoxin] + ATP + H(+) = [ThiI sulfur-carrier protein]-L-cysteine + a 4-thiouridine in tRNA + 2 oxidized [2Fe-2S]-[ferredoxin] + AMP + diphosphate. It carries out the reaction [ThiS sulfur-carrier protein]-C-terminal Gly-Gly-AMP + S-sulfanyl-L-cysteinyl-[cysteine desulfurase] + AH2 = [ThiS sulfur-carrier protein]-C-terminal-Gly-aminoethanethioate + L-cysteinyl-[cysteine desulfurase] + A + AMP + 2 H(+). It functions in the pathway cofactor biosynthesis; thiamine diphosphate biosynthesis. Catalyzes the ATP-dependent transfer of a sulfur to tRNA to produce 4-thiouridine in position 8 of tRNAs, which functions as a near-UV photosensor. Also catalyzes the transfer of sulfur to the sulfur carrier protein ThiS, forming ThiS-thiocarboxylate. This is a step in the synthesis of thiazole, in the thiamine biosynthesis pathway. The sulfur is donated as persulfide by IscS. This Thermococcus kodakarensis (strain ATCC BAA-918 / JCM 12380 / KOD1) (Pyrococcus kodakaraensis (strain KOD1)) protein is Probable tRNA sulfurtransferase.